Consider the following 586-residue polypeptide: UvrABC system protein C (586 aa).

Positions 17–94 (HKPGCYLWKD…IKQYKPRFNL (78 aa)) constitute a GIY-YIG domain. The UVR domain occupies 201–236 (EQVLNHLQQQEIKASEQQNFEAARHFLDLQKAVLEL).

It belongs to the UvrC family. As to quaternary structure, interacts with UvrB in an incision complex.

It localises to the cytoplasm. In terms of biological role, the UvrABC repair system catalyzes the recognition and processing of DNA lesions. UvrC both incises the 5' and 3' sides of the lesion. The N-terminal half is responsible for the 3' incision and the C-terminal half is responsible for the 5' incision. The protein is UvrABC system protein C of Mycoplasma pneumoniae (strain ATCC 29342 / M129 / Subtype 1) (Mycoplasmoides pneumoniae).